We begin with the raw amino-acid sequence, 436 residues long: Gamma-glutamyl phosphate reductase (436 aa).

This sequence belongs to the gamma-glutamyl phosphate reductase family.

The protein localises to the cytoplasm. It carries out the reaction L-glutamate 5-semialdehyde + phosphate + NADP(+) = L-glutamyl 5-phosphate + NADPH + H(+). It functions in the pathway amino-acid biosynthesis; L-proline biosynthesis; L-glutamate 5-semialdehyde from L-glutamate: step 2/2. Functionally, catalyzes the NADPH-dependent reduction of L-glutamate 5-phosphate into L-glutamate 5-semialdehyde and phosphate. The product spontaneously undergoes cyclization to form 1-pyrroline-5-carboxylate. The chain is Gamma-glutamyl phosphate reductase from Prochlorococcus marinus (strain MIT 9515).